The following is a 398-amino-acid chain: Acetate kinase (398 aa).

N7 provides a ligand contact to Mg(2+). ATP is bound at residue K14. R91 contacts substrate. D148 functions as the Proton donor/acceptor in the catalytic mechanism. ATP contacts are provided by residues 208–212 (HLGNG), 283–285 (DFR), and 331–335 (GIGEH). A Mg(2+)-binding site is contributed by E386.

It belongs to the acetokinase family. Homodimer. The cofactor is Mg(2+). Requires Mn(2+) as cofactor.

Its subcellular location is the cytoplasm. The catalysed reaction is acetate + ATP = acetyl phosphate + ADP. Its pathway is metabolic intermediate biosynthesis; acetyl-CoA biosynthesis; acetyl-CoA from acetate: step 1/2. Catalyzes the formation of acetyl phosphate from acetate and ATP. Can also catalyze the reverse reaction. The chain is Acetate kinase from Clostridium botulinum (strain Eklund 17B / Type B).